A 252-amino-acid polypeptide reads, in one-letter code: Chitooligosaccharide deacetylase (252 aa).

2 residues coordinate Mg(2+): His61 and His125.

The protein belongs to the YdjC deacetylase family. ChbG subfamily. As to quaternary structure, homodimer. Requires Mg(2+) as cofactor.

It is found in the cytoplasm. The enzyme catalyses N,N'-diacetylchitobiose + H2O = N-acetyl-beta-D-glucosaminyl-(1-&gt;4)-D-glucosamine + acetate. The catalysed reaction is diacetylchitobiose-6'-phosphate + H2O = N'-monoacetylchitobiose-6'-phosphate + acetate. It functions in the pathway glycan degradation; chitin degradation. Involved in the degradation of chitin. ChbG is essential for growth on the acetylated chitooligosaccharides chitobiose and chitotriose but is dispensable for growth on cellobiose and chitosan dimer, the deacetylated form of chitobiose. Deacetylation of chitobiose-6-P and chitotriose-6-P is necessary for both the activation of the chb promoter by the regulatory protein ChbR and the hydrolysis of phosphorylated beta-glucosides by the phospho-beta-glucosidase ChbF. Catalyzes the removal of only one acetyl group from chitobiose-6-P to yield monoacetylchitobiose-6-P, the inducer of ChbR and the substrate of ChbF. The protein is Chitooligosaccharide deacetylase of Klebsiella pneumoniae subsp. pneumoniae (strain ATCC 700721 / MGH 78578).